A 210-amino-acid polypeptide reads, in one-letter code: Large ribosomal subunit protein uL3 (210 aa).

Positions 136-156 (THGTEKAHRSGGSIGNNTEPG) are disordered.

It belongs to the universal ribosomal protein uL3 family. In terms of assembly, part of the 50S ribosomal subunit. Forms a cluster with proteins L14 and L19.

One of the primary rRNA binding proteins, it binds directly near the 3'-end of the 23S rRNA, where it nucleates assembly of the 50S subunit. This is Large ribosomal subunit protein uL3 from Solidesulfovibrio magneticus (strain ATCC 700980 / DSM 13731 / RS-1) (Desulfovibrio magneticus).